A 267-amino-acid chain; its full sequence is 3-deoxy-manno-octulosonate cytidylyltransferase 2 (267 aa).

This sequence belongs to the KdsB family.

It is found in the cytoplasm. It catalyses the reaction 3-deoxy-alpha-D-manno-oct-2-ulosonate + CTP = CMP-3-deoxy-beta-D-manno-octulosonate + diphosphate. It participates in nucleotide-sugar biosynthesis; CMP-3-deoxy-D-manno-octulosonate biosynthesis; CMP-3-deoxy-D-manno-octulosonate from 3-deoxy-D-manno-octulosonate and CTP: step 1/1. Its pathway is bacterial outer membrane biogenesis; lipopolysaccharide biosynthesis. Functionally, activates KDO (a required 8-carbon sugar) for incorporation into bacterial lipopolysaccharide in Gram-negative bacteria. This is 3-deoxy-manno-octulosonate cytidylyltransferase 2 from Burkholderia ambifaria (strain MC40-6).